Consider the following 234-residue polypeptide: Small ribosomal subunit protein uS2c (234 aa).

Belongs to the universal ribosomal protein uS2 family.

It localises to the plastid. It is found in the chloroplast. The protein is Small ribosomal subunit protein uS2c (rps2) of Pinus thunbergii (Japanese black pine).